A 207-amino-acid polypeptide reads, in one-letter code: Large ribosomal subunit protein uL4 (207 aa).

The tract at residues 49-78 is disordered; it reads HAVKNRSAVSGGGRKPWRQKGTGRARQGSI.

Belongs to the universal ribosomal protein uL4 family. As to quaternary structure, part of the 50S ribosomal subunit.

Functionally, one of the primary rRNA binding proteins, this protein initially binds near the 5'-end of the 23S rRNA. It is important during the early stages of 50S assembly. It makes multiple contacts with different domains of the 23S rRNA in the assembled 50S subunit and ribosome. Forms part of the polypeptide exit tunnel. The chain is Large ribosomal subunit protein uL4 from Streptococcus suis (strain 98HAH33).